We begin with the raw amino-acid sequence, 884 residues long: DNA mismatch repair protein MutS (884 aa).

Residue 643-650 (GPNMGGKS) coordinates ATP.

The protein belongs to the DNA mismatch repair MutS family.

Functionally, this protein is involved in the repair of mismatches in DNA. It is possible that it carries out the mismatch recognition step. This protein has a weak ATPase activity. This chain is DNA mismatch repair protein MutS, found in Methylobacillus flagellatus (strain ATCC 51484 / DSM 6875 / VKM B-1610 / KT).